Consider the following 302-residue polypeptide: MSKPDVAQVKAFLLQLQDEICRSLEQADGVGRFVEDAWAREGGGGGRTRVMRHGDMIEQGGVNFSHVYGDAMPASATAHRPELAGRKFEAMGVSLVIHPHNPYVPTSHANVRFFIAEKEGEEPIWWFGGGFDLTPFYPFAEDVQHWHRVSRDLCQPFGEDIYPEFKSWCDRYFFLKHRNETRGVGGLFFDDLNRWPFADCFAFMQAVGRGYLDAYLPIIERRKAQPYGEREREFQLYRRGRYVEFNLVYDRGTLFGLQTGGRTESILMSMPPLARWEYDWQPEAGSPEALLYTDYLAPREWL.

Substrate is bound at residue Ser-94. A divalent metal cation-binding residues include His-98 and His-108. His-108 acts as the Proton donor in catalysis. Position 110–112 (Asn-110–Arg-112) interacts with substrate. A divalent metal cation-binding residues include His-147 and His-177. The interval Tyr-242 to Glu-277 is important for dimerization. A substrate-binding site is contributed by Gly-260 to Arg-262.

This sequence belongs to the aerobic coproporphyrinogen-III oxidase family. Homodimer. A divalent metal cation serves as cofactor.

It localises to the cytoplasm. It carries out the reaction coproporphyrinogen III + O2 + 2 H(+) = protoporphyrinogen IX + 2 CO2 + 2 H2O. It functions in the pathway porphyrin-containing compound metabolism; protoporphyrin-IX biosynthesis; protoporphyrinogen-IX from coproporphyrinogen-III (O2 route): step 1/1. Involved in the heme biosynthesis. Catalyzes the aerobic oxidative decarboxylation of propionate groups of rings A and B of coproporphyrinogen-III to yield the vinyl groups in protoporphyrinogen-IX. In Aeromonas salmonicida (strain A449), this protein is Oxygen-dependent coproporphyrinogen-III oxidase.